The chain runs to 560 residues: DNA ligase B (560 aa).

The active-site N6-AMP-lysine intermediate is the Lys-124.

The protein belongs to the NAD-dependent DNA ligase family. LigB subfamily.

The enzyme catalyses NAD(+) + (deoxyribonucleotide)n-3'-hydroxyl + 5'-phospho-(deoxyribonucleotide)m = (deoxyribonucleotide)n+m + AMP + beta-nicotinamide D-nucleotide.. Catalyzes the formation of phosphodiester linkages between 5'-phosphoryl and 3'-hydroxyl groups in double-stranded DNA using NAD as a coenzyme and as the energy source for the reaction. In Escherichia coli O17:K52:H18 (strain UMN026 / ExPEC), this protein is DNA ligase B.